We begin with the raw amino-acid sequence, 209 residues long: Thymidine kinase (209 aa).

Residues Gly-16–Thr-23 and Asp-90–Gln-93 contribute to the ATP site. The active-site Proton acceptor is Glu-91.

This sequence belongs to the thymidine kinase family. In terms of assembly, homotetramer.

The protein resides in the cytoplasm. The enzyme catalyses thymidine + ATP = dTMP + ADP + H(+). This chain is Thymidine kinase, found in Onion yellows phytoplasma (strain OY-M).